The sequence spans 101 residues: Small ribosomal subunit protein uS14 (101 aa).

This sequence belongs to the universal ribosomal protein uS14 family. Part of the 30S ribosomal subunit. Contacts proteins S3 and S10.

Its function is as follows. Binds 16S rRNA, required for the assembly of 30S particles and may also be responsible for determining the conformation of the 16S rRNA at the A site. The protein is Small ribosomal subunit protein uS14 of Tropheryma whipplei (strain TW08/27) (Whipple's bacillus).